A 515-amino-acid chain; its full sequence is Putative myristoylated protein 118L (515 aa).

G2 carries N-myristoyl glycine; by host lipidation. 3 helical membrane passes run 188 to 208, 214 to 234, and 482 to 502; these read LSLA…VGGV, IIFP…FQWT, and WLLY…AFSS.

It belongs to the IIV-6 118L/458R family.

The protein resides in the membrane. This Acheta domesticus (House cricket) protein is Putative myristoylated protein 118L.